A 111-amino-acid polypeptide reads, in one-letter code: Cytochrome c (111 aa).

Residue Ala-1 is modified to N-acetylalanine. The heme c site is built by Cys-22, Cys-25, and His-26. Lys-80 carries the post-translational modification N6,N6,N6-trimethyllysine. Residue Met-88 participates in heme c binding. Lys-94 is modified (N6,N6,N6-trimethyllysine).

Belongs to the cytochrome c family. In terms of processing, binds 1 heme c group covalently per subunit.

The protein localises to the mitochondrion intermembrane space. In terms of biological role, electron carrier protein. The oxidized form of the cytochrome c heme group can accept an electron from the heme group of the cytochrome c1 subunit of cytochrome reductase. Cytochrome c then transfers this electron to the cytochrome oxidase complex, the final protein carrier in the mitochondrial electron-transport chain. The chain is Cytochrome c from Nigella damascena (Love-in-a-mist).